The primary structure comprises 962 residues: MSNTTVEQFAAELKRPVEDLLKQLKEAGVSKNSGSDSLTLDDKQLLNAYLTKKNGSNGGTISIRRTKTEVSTVDGVKVETRKRGRTVNIPSAEELAAQVKAAQTQAAPVRPEQTAEDAAKARAEAATRAEARAKAEAEAAKLKAAKAGNKAKPAAQKPTEAKAETAPVAAETKPAEESKAEKAQADKMPSKKPAEPKEKAAKPKHERNGKGKDAKKPAKPAAPAVPQPVVSAEEQAQRDEEARRAAALRAHQEALLKEKQERQARREAMKQQAEQQAKAAQEAKTGRQRPAKPAEKPQAAAPAVENKPVNPAKAKKENRRNRDDEGQGRNAKGKGGKGGRDRNNARNGDDERVRGSKKGKKLKLEPNQHAFQAPTEPVVHEVLVPETITVADLAHKMAVKGVEVVKALMKMGMMVTINQSIDQDTALIVVEELGHIGKPAAADDPEAFLDEGAEAVEAEALPRPPVVTVMGHVDHGKTSLLDYIRRAKVVQGEAGGITQHIGAYHVKTPRGVITFLDTPGHEAFTAMRARGAKATDIVILVVAADDGVMPQTIEAIAHAKAAGVPMVVAVNKIDKEAANPERIRQELTAHEVVPDEWGGDVQFIDVSAKKGLNIDALLEAVLLEAEVLELTAPVDAPAKGIIVEARLDKGRGAVATLLVQSGTLKKGDMLLAGTAFGKIRAMVDENGKAINEAGPSIPVEILGLSDVPNAGEDAMVLADEKKAREIALFRQGKYRDVRLAKQQAAKLENMFNNMGETQAQSLSVIIKADVQGSYEALAGSLKKLSTDEVKVDVLHSGVGGITESDVNLAIASGAFIIGFNVRADASSRKLAENENVEIRYYNIIYDAIDDVKAAMSGMLSPEEKEQVTGTVEIRQVISVSKVGNIAGCMVTDGVVKRDSHARLIRNNVVIHTGELSSLKRYKDDVKEVRMGFECGLMIKGYNEIMEGDQLECFDIVEVARTL.

Residues 101–366 (AAQTQAAPVR…KKGKKLKLEP (266 aa)) are disordered. The span at 117-141 (DAAKARAEAATRAEARAKAEAEAAK) shows a compositional bias: basic and acidic residues. Residues 145-157 (AKAGNKAKPAAQK) show a composition bias toward low complexity. Over residues 173–216 (KPAEESKAEKAQADKMPSKKPAEPKEKAAKPKHERNGKGKDAKK) the composition is skewed to basic and acidic residues. Positions 219-234 (KPAAPAVPQPVVSAEE) are enriched in low complexity. The span at 235–269 (QAQRDEEARRAAALRAHQEALLKEKQERQARREAM) shows a compositional bias: basic and acidic residues. Residues 270-283 (KQQAEQQAKAAQEA) show a composition bias toward low complexity. A compositionally biased stretch (basic and acidic residues) spans 338–354 (GGRDRNNARNGDDERVR). Residues 462 to 631 (PRPPVVTVMG…LLEAEVLELT (170 aa)) enclose the tr-type G domain. Positions 471-478 (GHVDHGKT) are G1. A GTP-binding site is contributed by 471–478 (GHVDHGKT). Residues 496–500 (GITQH) are G2. Positions 517-520 (DTPG) are G3. GTP-binding positions include 517–521 (DTPGH) and 571–574 (NKID). Positions 571-574 (NKID) are G4. The segment at 607 to 609 (SAK) is G5.

This sequence belongs to the TRAFAC class translation factor GTPase superfamily. Classic translation factor GTPase family. IF-2 subfamily.

The protein resides in the cytoplasm. Its function is as follows. One of the essential components for the initiation of protein synthesis. Protects formylmethionyl-tRNA from spontaneous hydrolysis and promotes its binding to the 30S ribosomal subunits. Also involved in the hydrolysis of GTP during the formation of the 70S ribosomal complex. This is Translation initiation factor IF-2 from Neisseria meningitidis serogroup A / serotype 4A (strain DSM 15465 / Z2491).